Consider the following 287-residue polypeptide: MNTVKTVRELRAAVARARGEGKRIGFVPTMGNLHSGHAALVTKAAQRADFVVASIFVNPLQFGANEDLDKYPRTLAADQERLLQAGCNLLFAPAVEEMYPDGMSVQTRVSVPQLSEGLCGASRPGHFEGVATVVSKLFNMVQPDLAVFGEKDFQQLAVIRAMVRDLNMPIQIIGEPTVRADDGLALSSRNGYLTPEQRTAAPALYRTLQHIAAGIGRGQRDFAALVAEGQAQLSAAGFRPDYLEVRHAVSLRPALIDDRDLVVIAAAYLGNTRLIDNLYLHLEEKTA.

30-37 (MGNLHSGH) serves as a coordination point for ATP. His-37 serves as the catalytic Proton donor. Residue Gln-61 coordinates (R)-pantoate. Residue Gln-61 participates in beta-alanine binding. 149 to 152 (GEKD) contacts ATP. Gln-155 is a binding site for (R)-pantoate. ATP contacts are provided by residues Val-178 and 186–189 (LSSR).

It belongs to the pantothenate synthetase family. Homodimer.

Its subcellular location is the cytoplasm. The catalysed reaction is (R)-pantoate + beta-alanine + ATP = (R)-pantothenate + AMP + diphosphate + H(+). It functions in the pathway cofactor biosynthesis; (R)-pantothenate biosynthesis; (R)-pantothenate from (R)-pantoate and beta-alanine: step 1/1. Functionally, catalyzes the condensation of pantoate with beta-alanine in an ATP-dependent reaction via a pantoyl-adenylate intermediate. This chain is Pantothenate synthetase, found in Pseudomonas putida (strain GB-1).